We begin with the raw amino-acid sequence, 612 residues long: Protein cereblon (612 aa).

Residues 1–11 are compositionally biased toward acidic residues; the sequence is MDDEETAEIED. Disordered stretches follow at residues 1 to 30, 58 to 133, and 181 to 211; these read MDDE…GASA, MELI…NPHP, and QERR…PYDV. A compositionally biased stretch (low complexity) spans 69–81; that stretch reads AADAPDAAASTGS. The segment covering 181–190 has biased composition (basic and acidic residues); the sequence is QERRRSRTSE. Residues 250–478 form the Lon N-terminal domain; it reads HMLIFLHQHI…IIGSTLKDES (229 aa). Positions 477-586 constitute a CULT domain; it reads ESVFYCRYCN…LAGSSVRIGK (110 aa). Positions 482, 485, 551, and 554 each coordinate Zn(2+).

The protein belongs to the CRBN family. As to quaternary structure, likely a component of a DCX (DDB1-CUL4-X-box) protein ligase complex. May interact with pic/DDB1. Ubiquitinated.

Its subcellular location is the nucleus. Its pathway is protein modification; protein ubiquitination. Substrate recognition component of a DCX (DDB1-CUL4-X-box) E3 protein ligase complex that mediates the ubiquitination and subsequent proteasomal degradation of target proteins. Has an essential role in mediating growth by negatively regulating insulin signaling. It also has a role in maintaining presynaptic function in the neuromuscular junction synapses of third-instar larvae. In Drosophila willistoni (Fruit fly), this protein is Protein cereblon.